Reading from the N-terminus, the 529-residue chain is MSALNSFNMYKSALILGSLLATAGAQQIGTYTAETHPSLSWSTCKSGGSCTTNSGAITLDANWRWVHGVNTSTNCYTGNTWNTAICDTDASCAQDCALDGADYSGTYGITTSGNSLRLNFVTGSNVGSRTYLMADNTHYQIFDLLNQEFTFTVDVSNLPCGLNGALYFVTMDADGGVSKYPNNKAGAQYGVGYCDSQCPRDLKFIAGQANVEGWTPSTNNSNTGIGNHGSCCAELDIWEANSISEALTPHPCDTPGLTVCTADDCGGTYSSNRYAGTCDPDGCDFNPYRLGVTDFYGSGKTVDTTKPFTVVTQFVTDDGTSSGSLSEIRRYYVQNGVVIPQPSSKISGISGNVINSDFCAAELSAFGETASFTNHGGLKNMGSALEAGMVLVMSLWDDYSVNMLWLDSTYPANETGTPGAARGSCPTTSGNPKTVESQSGSSYVVFSDIKVGPFNSTFSGGTSTGGSTTTTASGTTSTKASTTSTSSTSTGTGVAAHWGQCGGQGWTGPTTCASGTTCTVVNPYYSQCL.

The first 25 residues, 1 to 25 (MSALNSFNMYKSALILGSLLATAGA), serve as a signal peptide directing secretion. A catalytic region spans residues 26-456 (QQIGTYTAET…SDIKVGPFNS (431 aa)). 2 N-linked (GlcNAc...) asparagine glycosylation sites follow: Asn70 and Asn219. The active-site Nucleophile is Glu234. The active-site Proton donor is Glu239. A glycan (N-linked (GlcNAc...) asparagine) is linked at Asn413. The tract at residues 413–438 (NETGTPGAARGSCPTTSGNPKTVESQ) is disordered. The span at 425 to 438 (CPTTSGNPKTVESQ) shows a compositional bias: polar residues. Residue Asn455 is glycosylated (N-linked (GlcNAc...) asparagine). Residues 457 to 493 (TFSGGTSTGGSTTTTASGTTSTKASTTSTSSTSTGTG) are thr-rich linker. The tract at residues 460–491 (GGTSTGGSTTTTASGTTSTKASTTSTSSTSTG) is disordered. The region spanning 493 to 529 (GVAAHWGQCGGQGWTGPTTCASGTTCTVVNPYYSQCL) is the CBM1 domain. Disulfide bonds link Cys501/Cys518 and Cys512/Cys528.

The protein belongs to the glycosyl hydrolase 7 (cellulase C) family.

Its subcellular location is the secreted. The catalysed reaction is Hydrolysis of (1-&gt;4)-beta-D-glucosidic linkages in cellulose and cellotetraose, releasing cellobiose from the non-reducing ends of the chains.. With respect to regulation, cellobiose inhibits xynA at high concentrations. Its function is as follows. The biological conversion of cellulose to glucose generally requires three types of hydrolytic enzymes: (1) Endoglucanases which cut internal beta-1,4-glucosidic bonds; (2) Exocellobiohydrolases that cut the disaccharide cellobiose from the non-reducing end of the cellulose polymer chain; (3) Beta-1,4-glucosidases which hydrolyze the cellobiose and other short cello-oligosaccharides to glucose. In Talaromyces funiculosus (Fruitlet core rot fungus), this protein is 1,4-beta-D-glucan cellobiohydrolase xynA (xynA).